A 261-amino-acid chain; its full sequence is Uridine-cytidine kinase 2 (261 aa).

Residues 1–24 (MAGDSEQALPKHSPQNGQPFLIGV) form a disordered region. 26-34 (GGTASGKSS) is a binding site for ATP. Residues Asp-83, Tyr-111, His-116, Arg-165, Arg-175, and Gln-183 each contribute to the substrate site. Residue Asp-212 coordinates ATP. The segment covering 238 to 247 (NGYTNGFTSP) has biased composition (polar residues). A disordered region spans residues 238 to 261 (NGYTNGFTSPRTRHPSDSNSSRPH).

The protein belongs to the uridine kinase family. Homotetramer.

It carries out the reaction uridine + ATP = UMP + ADP + H(+). It catalyses the reaction cytidine + ATP = CMP + ADP + H(+). The protein operates within pyrimidine metabolism; CTP biosynthesis via salvage pathway; CTP from cytidine: step 1/3. It participates in pyrimidine metabolism; UMP biosynthesis via salvage pathway; UMP from uridine: step 1/1. Functionally, phosphorylates uridine and cytidine to uridine monophosphate and cytidine monophosphate. Does not phosphorylate deoxyribonucleosides or purine ribonucleosides. Can use ATP or GTP as a phosphate donor. The chain is Uridine-cytidine kinase 2 (uck2) from Xenopus tropicalis (Western clawed frog).